The primary structure comprises 115 residues: MSRVKRGNVAKKRRAKIFKLAKGFKGAHKCLFRTAKQQVLKALRYSYVGRKRKKRDFRRLWITRINAAAHNQGMNYSTFISALKKENIALNRKMLAQLASNDIQTFQTVLETVKN.

Belongs to the bacterial ribosomal protein bL20 family.

The protein resides in the plastid. Its subcellular location is the chloroplast. Binds directly to 23S ribosomal RNA and is necessary for the in vitro assembly process of the 50S ribosomal subunit. It is not involved in the protein synthesizing functions of that subunit. The chain is Large ribosomal subunit protein bL20c from Pyropia yezoensis (Susabi-nori).